An 862-amino-acid chain; its full sequence is Probable disease resistance protein At5g43740 (862 aa).

A coiled-coil region spans residues 24 to 61; that stretch reads RNYIHMMESNLDALQKTMEELKNGRDDLLGRVSIEEDK. The 304-residue stretch at 135-438 folds into the NB-ARC domain; it reads MVAQEIIHKV…CEGFINPNRY (304 aa). Residue 178–185 coordinates ATP; the sequence is GMGGVGKT. LRR repeat units lie at residues 511–532, 533–555, 558–580, and 582–604; these read IVRT…SKCP, NLST…FFRF, KLVV…ISNL, and SLQY…KKLR.

It belongs to the disease resistance NB-LRR family.

Functionally, probable disease resistance protein. The protein is Probable disease resistance protein At5g43740 of Arabidopsis thaliana (Mouse-ear cress).